A 98-amino-acid chain; its full sequence is NADH-ubiquinone oxidoreductase chain 4L (98 aa).

The next 3 membrane-spanning stretches (helical) occupy residues 1 to 21 (MSLT…GLLM), 31 to 51 (LCLE…VLTI), and 61 to 81 (IILL…LVVV).

This sequence belongs to the complex I subunit 4L family. Core subunit of respiratory chain NADH dehydrogenase (Complex I) which is composed of 45 different subunits.

It is found in the mitochondrion inner membrane. It catalyses the reaction a ubiquinone + NADH + 5 H(+)(in) = a ubiquinol + NAD(+) + 4 H(+)(out). Functionally, core subunit of the mitochondrial membrane respiratory chain NADH dehydrogenase (Complex I) which catalyzes electron transfer from NADH through the respiratory chain, using ubiquinone as an electron acceptor. Part of the enzyme membrane arm which is embedded in the lipid bilayer and involved in proton translocation. The chain is NADH-ubiquinone oxidoreductase chain 4L (MT-ND4L) from Chalinolobus tuberculatus (New Zealand long-tailed bat).